The following is a 513-amino-acid chain: QWRF motif-containing protein 9 (513 aa).

3 stretches are compositionally biased toward polar residues: residues 1 to 26 (MTAA…PSES), 43 to 55 (GTSS…SPKR), and 65 to 78 (VTPS…PQST). Disordered stretches follow at residues 1-89 (MTAA…RREV), 115-144 (GTLE…LSDQ), and 184-293 (VSNR…LRVR). A compositionally biased stretch (basic and acidic residues) spans 79-89 (PRRESLDRREV). Polar residues-rich tracts occupy residues 202–211 (ESVSSGSSNG) and 244–262 (VDSS…SPRG). Positions 334 to 337 (QWQF) match the QWRF motif motif.

The protein belongs to the QWRF family.

This chain is QWRF motif-containing protein 9 (QWRF9), found in Arabidopsis thaliana (Mouse-ear cress).